Consider the following 431-residue polypeptide: Enolase (431 aa).

Gln162 provides a ligand contact to (2R)-2-phosphoglycerate. Glu204 acts as the Proton donor in catalysis. 3 residues coordinate Mg(2+): Asp241, Glu284, and Asp311. The (2R)-2-phosphoglycerate site is built by Lys336, Arg365, Ser366, and Lys387. The active-site Proton acceptor is the Lys336.

The protein belongs to the enolase family. Requires Mg(2+) as cofactor.

Its subcellular location is the cytoplasm. The protein resides in the secreted. It localises to the cell surface. It carries out the reaction (2R)-2-phosphoglycerate = phosphoenolpyruvate + H2O. It functions in the pathway carbohydrate degradation; glycolysis; pyruvate from D-glyceraldehyde 3-phosphate: step 4/5. Catalyzes the reversible conversion of 2-phosphoglycerate (2-PG) into phosphoenolpyruvate (PEP). It is essential for the degradation of carbohydrates via glycolysis. The polypeptide is Enolase (Sorangium cellulosum (strain So ce56) (Polyangium cellulosum (strain So ce56))).